A 529-amino-acid polypeptide reads, in one-letter code: Peptide chain release factor 3 (529 aa).

The tr-type G domain maps to 11 to 280 (AKRRTFAIIS…GLVEWAPAPM (270 aa)). Residues 20–27 (SHPDAGKT), 88–92 (DTPGH), and 142–145 (NKLD) each bind GTP.

It belongs to the TRAFAC class translation factor GTPase superfamily. Classic translation factor GTPase family. PrfC subfamily.

It is found in the cytoplasm. Functionally, increases the formation of ribosomal termination complexes and stimulates activities of RF-1 and RF-2. It binds guanine nucleotides and has strong preference for UGA stop codons. It may interact directly with the ribosome. The stimulation of RF-1 and RF-2 is significantly reduced by GTP and GDP, but not by GMP. This Shigella flexneri serotype 5b (strain 8401) protein is Peptide chain release factor 3.